Reading from the N-terminus, the 320-residue chain is o-succinylbenzoate synthase (320 aa).

Catalysis depends on Lys-133, which acts as the Proton donor. Asp-161, Glu-190, and Asp-213 together coordinate Mg(2+). Lys-235 (proton acceptor) is an active-site residue.

This sequence belongs to the mandelate racemase/muconate lactonizing enzyme family. MenC type 1 subfamily. The cofactor is a divalent metal cation.

It catalyses the reaction (1R,6R)-6-hydroxy-2-succinyl-cyclohexa-2,4-diene-1-carboxylate = 2-succinylbenzoate + H2O. Its pathway is quinol/quinone metabolism; 1,4-dihydroxy-2-naphthoate biosynthesis; 1,4-dihydroxy-2-naphthoate from chorismate: step 4/7. It participates in quinol/quinone metabolism; menaquinone biosynthesis. Converts 2-succinyl-6-hydroxy-2,4-cyclohexadiene-1-carboxylate (SHCHC) to 2-succinylbenzoate (OSB). In Escherichia fergusonii (strain ATCC 35469 / DSM 13698 / CCUG 18766 / IAM 14443 / JCM 21226 / LMG 7866 / NBRC 102419 / NCTC 12128 / CDC 0568-73), this protein is o-succinylbenzoate synthase.